Consider the following 138-residue polypeptide: Basic phospholipase A2 homolog CTs-K49a (138 aa).

Residues 1 to 16 form the signal peptide; it reads MRTLWIMAVLLVVVEG. 6 cysteine pairs are disulfide-bonded: C42–C131, C44–C60, C59–C111, C65–C138, C66–C104, and C91–C102. The tract at residues 121 to 133 is important for membrane-damaging activities in eukaryotes and bacteria; heparin-binding; sequence KKKKINLKLFCKK.

This sequence belongs to the phospholipase A2 family. Group II subfamily. K49 sub-subfamily. In terms of tissue distribution, expressed by the venom gland.

It is found in the secreted. In terms of biological role, snake venom phospholipase A2 homolog that lacks catalytic activity. It shows myotoxic and weak anticoagulant activities. A model of myotoxic mechanism has been proposed: an apo Lys49-PLA2 is activated by the entrance of a hydrophobic molecule (e.g. fatty acid) at the hydrophobic channel of the protein leading to a reorientation of a monomer. This reorientation causes a transition between 'inactive' to 'active' states, causing alignment of C-terminal and membrane-docking sites (MDoS) side-by-side and putting the membrane-disruption sites (MDiS) in the same plane, exposed to solvent and in a symmetric position for both monomers. The MDoS region stabilizes the toxin on membrane by the interaction of charged residues with phospholipid head groups. Subsequently, the MDiS region destabilizes the membrane with penetration of hydrophobic residues. This insertion causes a disorganization of the membrane, allowing an uncontrolled influx of ions (i.e. calcium and sodium), and eventually triggering irreversible intracellular alterations and cell death. This Trimeresurus stejnegeri (Chinese green tree viper) protein is Basic phospholipase A2 homolog CTs-K49a.